Consider the following 273-residue polypeptide: S-adenosylmethionine decarboxylase proenzyme (273 aa).

The Schiff-base intermediate with substrate; via pyruvic acid role is filled by Ser118. Pyruvic acid (Ser); by autocatalysis is present on Ser118. The active-site Proton acceptor; for processing activity is His123. The Proton donor; for catalytic activity role is filled by Cys146.

Belongs to the prokaryotic AdoMetDC family. Type 2 subfamily. In terms of assembly, heterooctamer of four alpha and four beta chains arranged as a tetramer of alpha/beta heterodimers. The cofactor is pyruvate. Post-translationally, is synthesized initially as an inactive proenzyme. Formation of the active enzyme involves a self-maturation process in which the active site pyruvoyl group is generated from an internal serine residue via an autocatalytic post-translational modification. Two non-identical subunits are generated from the proenzyme in this reaction, and the pyruvate is formed at the N-terminus of the alpha chain, which is derived from the carboxyl end of the proenzyme. The post-translation cleavage follows an unusual pathway, termed non-hydrolytic serinolysis, in which the side chain hydroxyl group of the serine supplies its oxygen atom to form the C-terminus of the beta chain, while the remainder of the serine residue undergoes an oxidative deamination to produce ammonia and the pyruvoyl group blocking the N-terminus of the alpha chain.

It catalyses the reaction S-adenosyl-L-methionine + H(+) = S-adenosyl 3-(methylsulfanyl)propylamine + CO2. It functions in the pathway amine and polyamine biosynthesis; S-adenosylmethioninamine biosynthesis; S-adenosylmethioninamine from S-adenosyl-L-methionine: step 1/1. In terms of biological role, catalyzes the decarboxylation of S-adenosylmethionine to S-adenosylmethioninamine (dcAdoMet), the propylamine donor required for the synthesis of the polyamines spermine and spermidine from the diamine putrescine. The sequence is that of S-adenosylmethionine decarboxylase proenzyme from Alkalilimnicola ehrlichii (strain ATCC BAA-1101 / DSM 17681 / MLHE-1).